The following is a 249-amino-acid chain: 5'-nucleotidase SurE (249 aa).

Positions 8, 9, 39, and 91 each coordinate a divalent metal cation.

Belongs to the SurE nucleotidase family. Requires a divalent metal cation as cofactor.

The protein resides in the cytoplasm. It carries out the reaction a ribonucleoside 5'-phosphate + H2O = a ribonucleoside + phosphate. Nucleotidase that shows phosphatase activity on nucleoside 5'-monophosphates. The sequence is that of 5'-nucleotidase SurE from Pseudomonas entomophila (strain L48).